Here is a 644-residue protein sequence, read N- to C-terminus: Chaperone protein DnaK (644 aa).

At threonine 199 the chain carries Phosphothreonine; by autocatalysis. The tract at residues 602 to 644 is disordered; the sequence is IYAKKSSEGQTAQGQTQSQESTKPAEEGVVDAEFEEVKEEDKK. A compositionally biased stretch (polar residues) spans 609–623; sequence EGQTAQGQTQSQEST. The span at 629 to 644 shows a compositional bias: acidic residues; it reads GVVDAEFEEVKEEDKK.

The protein belongs to the heat shock protein 70 family.

Its function is as follows. Acts as a chaperone. This chain is Chaperone protein DnaK, found in Legionella pneumophila (strain Lens).